A 3301-amino-acid polypeptide reads, in one-letter code: Cadherin EGF LAG seven-pass G-type receptor 3 (3301 aa).

The signal sequence occupies residues 1–31 (MARRPLWWGLPGPSTPVLLLLLLSLFPFSRE). The Extracellular portion of the chain corresponds to 32 to 2531 (ELGGGGDQDW…RLEGDLELLA (2500 aa)). Disordered regions lie at residues 148–189 (LPLD…ARRS) and 202–314 (KLWE…NRHP). Basic residues predominate over residues 267–276 (MRSRGLFRRR). Cadherin domains are found at residues 317-424 (PQYN…APVF), 425-536 (EQAQ…APQF), 537-642 (SEKR…APIF), 643-747 (VSTP…RPEF), 748-849 (TMKE…RPVF), 850-952 (QSAH…APQF), 953-1058 (VASH…APVF), 1059-1160 (PAEE…SPVL), and 1161-1257 (NNFQ…VVII). Asn-623 carries N-linked (GlcNAc...) asparagine glycosylation. Asn-838 is a glycosylation site (N-linked (GlcNAc...) asparagine). N-linked (GlcNAc...) asparagine glycosylation is found at Asn-1173, Asn-1213, Asn-1308, and Asn-1318. Positions 1366–1424 (DDNVCLREPCENYMKCVSVLRFDSSAPFLASTSTLFRPIQPIAGLRCRCPPGFTGDFCE) constitute an EGF-like 1; calcium-binding domain. 9 cysteine pairs are disulfide-bonded: Cys-1370–Cys-1381, Cys-1375–Cys-1412, Cys-1414–Cys-1423, Cys-1430–Cys-1441, Cys-1435–Cys-1450, Cys-1452–Cys-1459, Cys-1468–Cys-1479, Cys-1473–Cys-1489, and Cys-1491–Cys-1502. The EGF-like 2; calcium-binding domain maps to 1426–1460 (ELDLCYSNPCRNGGACARREGGYTCVCRPRFTDCE). The region spanning 1464 to 1503 (EAGRCVPGVCRNGGTCTNAPNGGFRCQCPAGGAFEGPRCE) is the EGF-like 3; calcium-binding domain. Residues 1504 to 1708 (VAARSFPPSS…VANNGTMAGC (205 aa)) enclose the Laminin G-like 1 domain. Asn-1638 and Asn-1702 each carry an N-linked (GlcNAc...) asparagine glycan. 4 disulfide bridges follow: Cys-1682–Cys-1708, Cys-1715–Cys-1726, Cys-1720–Cys-1735, and Cys-1737–Cys-1746. Residues 1711-1747 (KSHFCASGPCKNNGFCSERWGGFSCDCPVGFGGKDCR) form the EGF-like 4; calcium-binding domain. Positions 1751 to 1933 (AHPYHFQGNG…SHRVNVEPGC (183 aa)) constitute a Laminin G-like 2 domain. Asn-1759 is a glycosylation site (N-linked (GlcNAc...) asparagine). 9 cysteine pairs are disulfide-bonded: Cys-1904–Cys-1933, Cys-1939–Cys-1950, Cys-1944–Cys-1959, Cys-1961–Cys-1970, Cys-1974–Cys-1985, Cys-1979–Cys-1997, Cys-1999–Cys-2008, Cys-2016–Cys-2029, and Cys-2031–Cys-2041. Residues 1935-1971 (VTNPCASGPCPPHADCKDLWQTFSCTCRPGYYGPGCV) form the EGF-like 5; calcium-binding domain. A (3R)-3-hydroxyaspartate modification is found at Asp-1952. The 31-residue stretch at 1972-2002 (DACLLNPCQNQGSCRHLQGAPHGYTCDCVSG) folds into the EGF-like 6; calcium-binding domain. The region spanning 2003-2042 (YFGQHCEHRVDQQCPRGWWGSPTCGPCNCDVHKGFDPNCN) is the EGF-like 7; calcium-binding domain. A glycan (N-linked (GlcNAc...) asparagine) is linked at Asn-2042. The EGF-like 8; calcium-binding domain maps to 2044–2079 (TNGQCHCKEFHYRPRGSDSCLPCDCYPVGSTSRSCA). Disulfide bonds link Cys-2048–Cys-2063, Cys-2050–Cys-2066, Cys-2068–Cys-2078, Cys-2087–Cys-2096, and Cys-2099–Cys-2111. Residues 2066-2113 (CDCYPVGSTSRSCAPHSGQCPCRPGALGRQCNSCDSPFAEVTASGCRV) enclose the Laminin EGF-like domain. A Phosphotyrosine modification is found at Tyr-2115. Asn-2166, Asn-2185, Asn-2375, Asn-2465, and Asn-2497 each carry an N-linked (GlcNAc...) asparagine glycan. The interval 2353–2388 (LLPSQASQPSPSEVLPTSSNAENATASSVVSPPAPL) is disordered. Over residues 2355–2383 (PSQASQPSPSEVLPTSSNAENATASSVVS) the composition is skewed to low complexity. The GAIN-B domain occupies 2357–2521 (QASQPSPSEV…GVLMDASPRE (165 aa)). Cystine bridges form between Cys-2471-Cys-2503 and Cys-2491-Cys-2505. Residues 2471-2521 (CVQWDPPGPTDQHGMWTARDCELVHRNGSHARCRCSRTGTFGVLMDASPRE) form a GPS region. The chain crosses the membrane as a helical span at residues 2532–2552 (VFTHVVVAVSVTALVLTAAVL). Residues 2553–2563 (LSLRSLKSNVR) lie on the Cytoplasmic side of the membrane. A helical transmembrane segment spans residues 2564–2584 (GIHANVAAALGVAELLFLLGI). Over 2585–2592 (HRTHNQLL) the chain is Extracellular. Residues 2593–2613 (CTAVAILLHYFFLSTFAWLLV) form a helical membrane-spanning segment. The Cytoplasmic portion of the chain corresponds to 2614–2634 (QGLHLYRMQVEPRNVDRGAMR). The chain crosses the membrane as a helical span at residues 2635–2655 (FYHALGWGVPAVLLGLAVGLD). The Extracellular segment spans residues 2656 to 2673 (PEGYGNPDFCWISIHEPL). A helical membrane pass occupies residues 2674 to 2694 (IWSFAGPIVLVIVMNGTMFLL). Topologically, residues 2695–2716 (AARTSCSTGQREAKKTSVLTLR) are cytoplasmic. Residues 2717-2737 (SSFLLLLLVSASWLFGLLAVN) form a helical membrane-spanning segment. Over 2738–2744 (HSILAFH) the chain is Extracellular. Residues 2745–2765 (YLHAGLCGLQGLAVLLLFCVL) traverse the membrane as a helical segment. Residues 2766–3301 (NADARAAWTP…SEVPRSEGHS (536 aa)) are Cytoplasmic-facing. 3 disordered regions span residues 2823–2844 (SSAR…YLRD), 2879–2919 (AGAD…RPLR), and 2969–2992 (SNKD…TSLG). Positions 2881–2891 (ADSDSDSDLSL) are enriched in acidic residues. The segment covering 2910–2919 (TRGRFQRPLR) has biased composition (basic residues). Tyr-3042 bears the Phosphotyrosine mark. The segment at 3083–3301 (APVLHPLSRP…SEVPRSEGHS (219 aa)) is disordered. Ser-3090 is modified (phosphoserine). Positions 3094-3111 (SQERLDTAPARLEARDRG) are enriched in basic and acidic residues. Low complexity-rich tracts occupy residues 3168–3189 (SPQR…SLSR) and 3239–3261 (LSSI…STPS). Residues 3276–3289 (TPRSATSHSISELS) show a composition bias toward polar residues.

It belongs to the G-protein coupled receptor 2 family. LN-TM7 subfamily. As to expression, expressed in the CNS and in the eye.

Its subcellular location is the cell membrane. Functionally, receptor that may have an important role in cell/cell signaling during nervous system formation. This chain is Cadherin EGF LAG seven-pass G-type receptor 3 (Celsr3), found in Mus musculus (Mouse).